The primary structure comprises 192 residues: Probable nicotinate-nucleotide adenylyltransferase (192 aa).

This sequence belongs to the NadD family.

The enzyme catalyses nicotinate beta-D-ribonucleotide + ATP + H(+) = deamido-NAD(+) + diphosphate. The protein operates within cofactor biosynthesis; NAD(+) biosynthesis; deamido-NAD(+) from nicotinate D-ribonucleotide: step 1/1. Functionally, catalyzes the reversible adenylation of nicotinate mononucleotide (NaMN) to nicotinic acid adenine dinucleotide (NaAD). In Cereibacter sphaeroides (strain ATCC 17029 / ATH 2.4.9) (Rhodobacter sphaeroides), this protein is Probable nicotinate-nucleotide adenylyltransferase.